The chain runs to 64 residues: uncharacterized protein (64 aa).

This is an uncharacterized protein from Enterobacteria phage T4 (Bacteriophage T4).